We begin with the raw amino-acid sequence, 66 residues long: Large ribosomal subunit protein bL35 (66 aa).

It belongs to the bacterial ribosomal protein bL35 family. As to quaternary structure, part of the 50S ribosomal subunit. Contacts proteins L15 and L33.

Its function is as follows. Binds the 23S rRNA. The chain is Large ribosomal subunit protein bL35 (rpmI) from Deinococcus radiodurans (strain ATCC 13939 / DSM 20539 / JCM 16871 / CCUG 27074 / LMG 4051 / NBRC 15346 / NCIMB 9279 / VKM B-1422 / R1).